The chain runs to 160 residues: Cytochrome b6-f complex subunit 4 (160 aa).

Helical transmembrane passes span 36–56 (LLYI…GLAV), 95–115 (LLGV…PFPE), and 131–151 (TVFS…ALPI).

It belongs to the cytochrome b family. PetD subfamily. In terms of assembly, the 4 large subunits of the cytochrome b6-f complex are cytochrome b6, subunit IV (17 kDa polypeptide, petD), cytochrome f and the Rieske protein, while the 4 small subunits are petG, petL, petM and petN. The complex functions as a dimer.

The protein resides in the plastid. It is found in the chloroplast thylakoid membrane. Its function is as follows. Component of the cytochrome b6-f complex, which mediates electron transfer between photosystem II (PSII) and photosystem I (PSI), cyclic electron flow around PSI, and state transitions. The polypeptide is Cytochrome b6-f complex subunit 4 (Huperzia lucidula (Shining clubmoss)).